An 845-amino-acid polypeptide reads, in one-letter code: MVTVMPLEMEKTISKLMFDFQRSSTSDDDSGCALEEYAWVPPGLKPEQVHQYYSCLPEEKVPYVNSAGEKLRIKQLLHQLPPHDNEVRYCNSLDEEEKRELKLFSNQRKRENLGRGNVRPFPVTMTGAICEQCGGQIKGGDIAVFASRAGHGICWHPPCFVCTVCNELLVDLIYFYQDGKIYCGRHHAECLKPRCAACDEIIFADECTEAEGRHWHMRHFCCFECETVLGGQRYIMKEGRPYCCHCFESLYAEYCDTCAQHIGIDQGQMTYDGQHWHATETCFCCAHCKKSLLGRPFLPKQGQIFCSRACSAGEDPNGSDSSDSAFQNARAKESRRSAKIGKNKGKTEEAMLNQHSQLQVSSNRLSADVDPLSVQMDLLSLSSQTPSLNRDPIWRSREEPFHYGNKMEQNQSQSPLQLLSQCNIRTSYSPGGQGAGAQPDMWAKHFSNPKRSSSMALKGHGGSFIQECREDYYPGRLMSQESYSDMSSQSFNETRGSIPVPKYEEEEEEEEGGISTQQCRPRRPLSSLKYTEDMTPTEQTPRGSMESLALSNATGLSAEGGAKRQEHLSRFSMPDLSKDSGMNVSEKLSNMGTLNSSMQFRSAESVRSLLSAQQYQEMEGNLHQLSNPLGYRDLQSHGRMHQSFDFDGGIASSKLPGQEGVHIQPMSERTRRRTTSRDDNRRFRPHRSRRSRRSRSDNALHLASEREVIARLKERPPLRAREDYDQFMRQRSFQESLGQGSRRDLYSQCPRTVSDLALQNAFGERWGPYFTEYDWCSTCSSSSESDNEGYFLGEPIPQPARLRYVTSDELLHKYSSYGVPKSSTLGGRGQLHSRKRQKSKNCIIS.

The region spanning 18–126 (FDFQRSSTSD…NVRPFPVTMT (109 aa)) is the PET domain. Position 92 is a phosphoserine (serine 92). LIM zinc-binding domains lie at 128-193 (AICE…CLKP), 193-253 (PRCA…LYAE), and 253-317 (EYCD…EDPN). Disordered stretches follow at residues 314 to 346 (EDPN…NKGK) and 483 to 546 (YSDM…GSME). A compositionally biased stretch (polar residues) spans 318–327 (GSDSSDSAFQ). 3 positions are modified to phosphoserine: serine 319, serine 321, and serine 322. Phosphothreonine is present on residues threonine 535, threonine 537, and threonine 540. Phosphoserine occurs at positions 544 and 547. Residues 558–581 (AEGGAKRQEHLSRFSMPDLSKDSG) are disordered. Residues serine 608 and serine 643 each carry the phosphoserine modification. Residues 642-700 (QSFDFDGGIASSKLPGQEGVHIQPMSERTRRRTTSRDDNRRFRPHRSRRSRRSRSDNAL) form a disordered region. Residues 683–693 (FRPHRSRRSRR) are compositionally biased toward basic residues. At serine 732 the chain carries Phosphoserine. A disordered region spans residues 823–845 (STLGGRGQLHSRKRQKSKNCIIS). Cysteine 842 is subject to Cysteine methyl ester. The S-farnesyl cysteine moiety is linked to residue cysteine 842. A propeptide spans 843–845 (IIS) (removed in mature form).

Belongs to the prickle / espinas / testin family. As to expression, expressed in the hippocampus and cerebral cortex.

It localises to the nucleus membrane. The polypeptide is Prickle-like protein 2 (Prickle2) (Mus musculus (Mouse)).